We begin with the raw amino-acid sequence, 588 residues long: MKLEFTEKNYNSFVLQNLNKQRKRKEYWDMALTVDHHVFFAHRNVLAAVSPLVKSLVSSNDMKTTDELYITIDPNYLSPATVDQLLDYFYSGKVVISEQNVEELLRGAQYFNTPRLRIHCNDFLIKSIRRVNCLRYLFLAELFELKEVSDLAYSGIRDNFHFWASPEGSMHFMRCPPVIFGRLLRDENLHVLNEDQALSALINWVYFRKEEREKYFKKFFNYINLNAVSNKTLMFASNKLTGLENNSAHATLIESVLMDRKQERPCSLLSYQRKGALLDSVVILGGQKAHGKFNDGVFAYIIQENLWLKLSEMPYRAAALSATAAGRYIYISGGTTEQISGLKTAWRYDMDDNSWTKLPDLPIGLVFHTMVTCGGTVYSVGGSIAPRRYVSNIYRYDERKEAWCLAGKMSIPMDGTAVITKGDRNLYIVTGRCLVKGYISRVGVVDCFDTCTGEVVQCITFPIEFNHRPLLSFHQDNILRVHSHRQSVEINLQKIKANKSTTSVPLLPNSCPLDVSHAICSIGDSKVFVCGGVTTASDVQTKDYTINPNAYLLDQKIGEWKTLACPPEALDCPACCLAKLPCKILQRI.

The BTB domain occupies 28–98 (WDMALTVDHH…FYSGKVVISE (71 aa)). In terms of domain architecture, BACK spans 133 to 235 (CLRYLFLAEL…NAVSNKTLMF (103 aa)). Position 149 is a phosphoserine (S149). Kelch repeat units lie at residues 280–327 (SVVI…AAGR), 328–375 (YIYI…TCGG), 377–423 (VYSV…TKGD), 425–475 (NLYI…SFHQ), 476–525 (DNIL…IGDS), and 526–580 (KVFV…LAKL).

In terms of assembly, interacts with CYLC1; the interaction may be relevant for proper acrosome attachment to the nuclear envelope.

It localises to the cytoplasm. It is found in the cytoskeleton. The protein resides in the perinuclear theca. Its subcellular location is the calyx. Functionally, required for both nuclear and acrosomal shaping during spermiogenesis. The polypeptide is Calicin (Ccin) (Rattus norvegicus (Rat)).